Here is a 330-residue protein sequence, read N- to C-terminus: Aspartate--ammonia ligase (330 aa).

This sequence belongs to the class-II aminoacyl-tRNA synthetase family. AsnA subfamily.

It is found in the cytoplasm. The catalysed reaction is L-aspartate + NH4(+) + ATP = L-asparagine + AMP + diphosphate + H(+). Its pathway is amino-acid biosynthesis; L-asparagine biosynthesis; L-asparagine from L-aspartate (ammonia route): step 1/1. This chain is Aspartate--ammonia ligase, found in Salmonella schwarzengrund (strain CVM19633).